We begin with the raw amino-acid sequence, 400 residues long: Na(+)/H(+) antiporter NhaA (400 aa).

The next 12 helical transmembrane spans lie at 26-46, 71-91, 107-127, 137-157, 166-186, 189-209, 212-232, 233-253, 273-293, 299-319, 340-360, and 373-393; these read AGGILLLFSAVVAMLLANSPL, LIHWINDGFMAVFFVLVGMEV, IFPAIAAIGGMVIPAVVYWFI, GWAIPMATDIAFALGIMALLS, IFLLALAIIDDLGAIVVIALF, HGLSVQALIFSAVAIIALILL, FKVSALCAYMVVGAILWASVL, KSGVHATLAGVIIGFSIPLKG, FVILPLFAFANAGVSFAGIDV, PLLLAIASGLIIGKPVGIFGF, IFAVAVLCGIGFTMSMFLASL, and LSRLGILLGSTVSAILGYLFL.

Belongs to the NhaA Na(+)/H(+) (TC 2.A.33) antiporter family.

It localises to the cell inner membrane. It carries out the reaction Na(+)(in) + 2 H(+)(out) = Na(+)(out) + 2 H(+)(in). Na(+)/H(+) antiporter that extrudes sodium in exchange for external protons. The protein is Na(+)/H(+) antiporter NhaA of Haemophilus influenzae (strain PittGG).